A 150-amino-acid chain; its full sequence is Large ribosomal subunit protein bL9 (150 aa).

Belongs to the bacterial ribosomal protein bL9 family.

Its function is as follows. Binds to the 23S rRNA. The chain is Large ribosomal subunit protein bL9 from Burkholderia vietnamiensis (strain G4 / LMG 22486) (Burkholderia cepacia (strain R1808)).